A 203-amino-acid chain; its full sequence is Thymidylate kinase (203 aa).

10–17 contributes to the ATP binding site; that stretch reads GIDGAGKS.

Belongs to the thymidylate kinase family.

The catalysed reaction is dTMP + ATP = dTDP + ADP. Functionally, phosphorylation of dTMP to form dTDP in both de novo and salvage pathways of dTTP synthesis. In Cupriavidus necator (strain ATCC 17699 / DSM 428 / KCTC 22496 / NCIMB 10442 / H16 / Stanier 337) (Ralstonia eutropha), this protein is Thymidylate kinase.